The following is a 259-amino-acid chain: Triosephosphate isomerase (259 aa).

10–12 (NWK) is a substrate binding site. H100 serves as the catalytic Electrophile. The active-site Proton acceptor is the E172. Substrate contacts are provided by residues G178, S218, and 239 to 240 (GG).

The protein belongs to the triosephosphate isomerase family. As to quaternary structure, homodimer.

It localises to the cytoplasm. The enzyme catalyses D-glyceraldehyde 3-phosphate = dihydroxyacetone phosphate. Its pathway is carbohydrate biosynthesis; gluconeogenesis. The protein operates within carbohydrate degradation; glycolysis; D-glyceraldehyde 3-phosphate from glycerone phosphate: step 1/1. Its function is as follows. Involved in the gluconeogenesis. Catalyzes stereospecifically the conversion of dihydroxyacetone phosphate (DHAP) to D-glyceraldehyde-3-phosphate (G3P). This is Triosephosphate isomerase from Corynebacterium glutamicum (strain ATCC 13032 / DSM 20300 / JCM 1318 / BCRC 11384 / CCUG 27702 / LMG 3730 / NBRC 12168 / NCIMB 10025 / NRRL B-2784 / 534).